The sequence spans 405 residues: Dematin (405 aa).

Disordered regions lie at residues 1 to 30, 79 to 158, 173 to 192, and 203 to 332; these read MERL…PSSI, PRSR…GSPQ, FPAA…TDYW, and TEWR…DRGN. Residues 11–29 show a composition bias toward low complexity; sequence SPGSVSPSRDSSVPGSPSS. Phosphoserine occurs at positions 16, 18, 26, 92, 96, 105, 110, 113, and 156. Residues 108 to 123 are compositionally biased toward polar residues; sequence IISQASAPRTTGTPRT. Residues 216-227 show a composition bias toward acidic residues; it reads EEEEEEEDDDSG. The interval 224-308 is interaction with RASGRF2; sequence DDSGEEMKAL…SRLQSTEFSP (85 aa). Residue Ser226 is modified to Phosphoserine. Basic and acidic residues-rich tracts occupy residues 228 to 242 and 252 to 261; these read EEMK…EELS and ILKEEMEKSL. Ser269, Ser279, Ser289, Ser303, Ser315, Ser333, Ser372, and Ser383 each carry phosphoserine. The span at 276–322 shows a compositional bias: polar residues; that stretch reads FHTSLHQGTSKSSSLPAYGRTTLSRLQSTEFSPSGSETGSPGLQNGE. The HP domain maps to 337–405; sequence VLEQKIYPYE…NELKKKASLF (69 aa). At Ser403 the chain carries Phosphoserine; by PKA.

It belongs to the villin/gelsolin family. Monomeric (isoform 2); under reducing conditions. Self-associates. Exists under oxidizing condition as a trimer of two isoforms 2 and isoform 1 linked by disulfide bonds. Found in a complex with DMTN, F-actin and spectrin. Found in a complex with ADD2, DMTN and SLC2A1. Interacts with F-actin, ITPKB, RASGRF2 and spectrin. Isoform 2 interacts with SLC2A1 (via C-terminus cytoplasmic region). Isoform 1 and isoform 2 interact (phosphorylated form) with plasmodium berghei 14-3-3 protein; the interaction occurs in a PKA-dependent manner. Phosphorylated. Phosphorylation at Ser-403 by PKA causes the C-terminal headpiece domain to associate with the N-terminal core domain, and leads to the inhibition of its actin bundling activity. Post-translationally, the N-terminus is blocked. Expressed in platelets (at protein level). Expressed in heart, brain, lung, skeletal muscle, and kidney.

The protein localises to the cytoplasm. It localises to the cytosol. Its subcellular location is the perinuclear region. The protein resides in the cytoskeleton. It is found in the cell membrane. The protein localises to the membrane. It localises to the endomembrane system. Its subcellular location is the cell projection. Its function is as follows. Membrane-cytoskeleton-associated protein with F-actin-binding activity that induces F-actin bundles formation and stabilization. Its F-actin-bundling activity is reversibly regulated upon its phosphorylation by the cAMP-dependent protein kinase A (PKA). Binds to the erythrocyte membrane glucose transporter-1 SLC2A1/GLUT1, and hence stabilizes and attaches the spectrin-actin network to the erythrocytic plasma membrane. Plays a role in maintaining the functional integrity of PKA-activated erythrocyte shape and the membrane mechanical properties. Also plays a role as a modulator of actin dynamics in fibroblasts; acts as a negative regulator of the RhoA activation pathway. In platelets, functions as a regulator of internal calcium mobilization across the dense tubular system that affects platelet granule secretion pathways and aggregation. Also required for the formation of a diverse set of cell protrusions, such as filopodia and lamellipodia, necessary for platelet cell spreading, motility and migration. Acts as a tumor suppressor and inhibits malignant cell transformation. The chain is Dematin (DMTN) from Homo sapiens (Human).